The primary structure comprises 188 residues: MMGQAHAEDSGPAIKVHVTQGESHVSADPQVVMTTVLGSCIAACLRDPTTGIGGMNHFLLPDSGDRKDGGDAVRYGAYAMELLINGLLKKGARRDRLEAKIFGGGKLFDGLSDVGASNAAFAERFLRDEGIPIVSSSTGGLSARRVEFWPASGRVRQRLVAVDNAPAEVRRPTPAVAPTANSGDLELF.

It belongs to the CheD family.

It carries out the reaction L-glutaminyl-[protein] + H2O = L-glutamyl-[protein] + NH4(+). Its function is as follows. Probably deamidates glutamine residues to glutamate on methyl-accepting chemotaxis receptors (MCPs), playing an important role in chemotaxis. The protein is Probable chemoreceptor glutamine deamidase CheD of Caulobacter sp. (strain K31).